A 376-amino-acid chain; its full sequence is Putative glutamate--cysteine ligase 2-1 (376 aa).

It belongs to the glutamate--cysteine ligase type 2 family. YbdK subfamily.

It catalyses the reaction L-cysteine + L-glutamate + ATP = gamma-L-glutamyl-L-cysteine + ADP + phosphate + H(+). In terms of biological role, ATP-dependent carboxylate-amine ligase which exhibits weak glutamate--cysteine ligase activity. In Mycolicibacterium smegmatis (strain ATCC 700084 / mc(2)155) (Mycobacterium smegmatis), this protein is Putative glutamate--cysteine ligase 2-1.